The primary structure comprises 421 residues: Protein PHLOEM UNLOADING MODULATOR (421 aa).

A run of 7 helical transmembrane segments spans residues 30 to 50 (LMPV…LFYK), 60 to 80 (IPFL…ALCV), 124 to 144 (HIIG…SVVF), 158 to 178 (YIFT…STIL), 286 to 306 (AMAW…LFVA), 323 to 343 (CIVA…IWSA), and 397 to 417 (TVFA…ALTL).

It belongs to the sphingomyelin synthase family.

The protein localises to the membrane. It functions in the pathway sphingolipid metabolism. Functionally, catalyzes the biosynthesis of sphingolipids with very long-chain fatty acid (VLCFA). Required for the formation of plasmodesmal cytoplasmic sleeve during the transition from type I to type II plasmodesmata to modulate post-sieve elements (SE) unloading and symplastic cell-to-cell molecular trafficking at the phloem pole pericycle (PPP)-endodermis interface in roots. This chain is Protein PHLOEM UNLOADING MODULATOR, found in Arabidopsis thaliana (Mouse-ear cress).